A 301-amino-acid chain; its full sequence is NAD kinase (301 aa).

The active-site Proton acceptor is Asp84. NAD(+)-binding positions include 84–85 (DG), Arg89, 158–159 (NE), Lys169, Asn188, 199–204 (TAYSFS), and Gln258.

Belongs to the NAD kinase family. A divalent metal cation is required as a cofactor.

Its subcellular location is the cytoplasm. The enzyme catalyses NAD(+) + ATP = ADP + NADP(+) + H(+). Its function is as follows. Involved in the regulation of the intracellular balance of NAD and NADP, and is a key enzyme in the biosynthesis of NADP. Catalyzes specifically the phosphorylation on 2'-hydroxyl of the adenosine moiety of NAD to yield NADP. This chain is NAD kinase, found in Tropheryma whipplei (strain Twist) (Whipple's bacillus).